The following is a 519-amino-acid chain: Protein tweety homolog 1 (519 aa).

Over 1–42 (MTFASFLINFYSVIPRLNFKFHWTNDVFNLEWSSEYFQALAL) the chain is Extracellular. Residues 43 to 63 (VACLGAAVSLLLLVTIIIVWI) form a helical membrane-spanning segment. Over 64–82 (CQACHKNETTGKTRRRVRR) the chain is Cytoplasmic. The chain crosses the membrane as a helical span at residues 83-103 (LSTVLFIISVLCFFMLGVCLF). The Extracellular portion of the chain corresponds to 104–217 (ANEHVNRGMS…VLSLYESERW (114 aa)). Residues N142, N163, and N176 are each glycosylated (N-linked (GlcNAc...) asparagine). Residues 218 to 238 (AFLVILLSITMVVLFTGVVAF) form a helical membrane-spanning segment. Over 239–245 (CKQSKKG) the chain is Cytoplasmic. Residues 246–266 (AVVFSAIGFFIFVVVWLLISI) form a helical membrane-spanning segment. Residues 267 to 395 (SLPLTIALAD…GTCNQSVAGM (129 aa)) lie on the Extracellular side of the membrane. Residues N328, N341, N348, and N389 are each glycosylated (N-linked (GlcNAc...) asparagine). A helical transmembrane segment spans residues 396 to 416 (SIYMLSILLLGVFLFILLIVV). The Cytoplasmic portion of the chain corresponds to 417 to 519 (SKTWNLFSRL…YNNYEDRYNM (103 aa)). The segment at 459-485 (YNPRTRDRTEPSTNTTSGTADEPNAPL) is disordered.

It belongs to the tweety family.

Its subcellular location is the cell membrane. In terms of biological role, probable chloride channel. The sequence is that of Protein tweety homolog 1 (ttyh-1) from Caenorhabditis elegans.